Reading from the N-terminus, the 441-residue chain is Amino-acid acetyltransferase (441 aa).

Residues 295 to 434 (EKVRGAGIDD…KALYNFQRRS (140 aa)) form the N-acetyltransferase domain.

Belongs to the acetyltransferase family. ArgA subfamily.

It is found in the cytoplasm. It carries out the reaction L-glutamate + acetyl-CoA = N-acetyl-L-glutamate + CoA + H(+). It participates in amino-acid biosynthesis; L-arginine biosynthesis; N(2)-acetyl-L-ornithine from L-glutamate: step 1/4. The polypeptide is Amino-acid acetyltransferase (Photobacterium profundum (strain SS9)).